The primary structure comprises 71 residues: Protein MTH_1184 (71 aa).

The polypeptide is Protein MTH_1184 (Methanothermobacter thermautotrophicus (strain ATCC 29096 / DSM 1053 / JCM 10044 / NBRC 100330 / Delta H) (Methanobacterium thermoautotrophicum)).